Reading from the N-terminus, the 130-residue chain is Immunoglobulin kappa chain variable 9-120 (130 aa).

The first 22 residues, 1-22, serve as a signal peptide directing secretion; sequence MDMRAPAQIFGFLLLLFQGTRC. Positions 23–45 are framework-1; that stretch reads DIQMTQSPSSLSASLGERVSLTC. Cysteines 45 and 110 form a disulfide. A complementarity-determining-1 region spans residues 46–56; the sequence is RASQDIGSSLN. The segment at 57-71 is framework-2; sequence WLQQEPDGTIKRLIY. The complementarity-determining-2 stretch occupies residues 72–78; the sequence is ATSSLDS. The tract at residues 79-110 is framework-3; the sequence is GVPKRFSGSRSGSDYSLTISSLESEDFVDYYC. The interval 111 to 119 is complementarity-determining-3; it reads LQYASSPWT. The interval 120–129 is framework-4; the sequence is FGGGTKLEIK.

This chain is Immunoglobulin kappa chain variable 9-120, found in Mus musculus (Mouse).